The primary structure comprises 83 residues: Small ribosomal subunit protein bS20 (83 aa).

It belongs to the bacterial ribosomal protein bS20 family.

Functionally, binds directly to 16S ribosomal RNA. The sequence is that of Small ribosomal subunit protein bS20 from Staphylococcus carnosus (strain TM300).